A 611-amino-acid polypeptide reads, in one-letter code: DNA mismatch repair protein MutL (611 aa).

The interval asparagine 353–valine 387 is disordered. The span at alanine 363 to serine 380 shows a compositional bias: low complexity.

This sequence belongs to the DNA mismatch repair MutL/HexB family.

Its function is as follows. This protein is involved in the repair of mismatches in DNA. It is required for dam-dependent methyl-directed DNA mismatch repair. May act as a 'molecular matchmaker', a protein that promotes the formation of a stable complex between two or more DNA-binding proteins in an ATP-dependent manner without itself being part of a final effector complex. The protein is DNA mismatch repair protein MutL of Erwinia tasmaniensis (strain DSM 17950 / CFBP 7177 / CIP 109463 / NCPPB 4357 / Et1/99).